The sequence spans 534 residues: Replication factor C large subunit (534 aa).

ATP is bound at residue 45 to 52 (GPPGIGKT). Residues 444 to 463 (KNKKEIKVKTKKDTVEDSSK) are compositionally biased toward basic and acidic residues. The segment at 444–534 (KNKKEIKVKT…KSRQTTLFDF (91 aa)) is disordered. Positions 488–510 (SSNSTTKNKTESPKNSSKTSSKT) are enriched in low complexity. A compositionally biased stretch (basic residues) spans 517 to 527 (TSKKNNKKKSR).

It belongs to the activator 1 small subunits family. RfcL subfamily. In terms of assembly, heteromultimer composed of small subunits (RfcS) and large subunits (RfcL).

Functionally, part of the RFC clamp loader complex which loads the PCNA sliding clamp onto DNA. In Methanosphaera stadtmanae (strain ATCC 43021 / DSM 3091 / JCM 11832 / MCB-3), this protein is Replication factor C large subunit.